The chain runs to 121 residues: Large ribosomal subunit protein bL12 (121 aa).

This sequence belongs to the bacterial ribosomal protein bL12 family. Homodimer. Part of the ribosomal stalk of the 50S ribosomal subunit. Forms a multimeric L10(L12)X complex, where L10 forms an elongated spine to which 2 to 4 L12 dimers bind in a sequential fashion. Binds GTP-bound translation factors.

In terms of biological role, forms part of the ribosomal stalk which helps the ribosome interact with GTP-bound translation factors. Is thus essential for accurate translation. This is Large ribosomal subunit protein bL12 from Alkaliphilus oremlandii (strain OhILAs) (Clostridium oremlandii (strain OhILAs)).